The chain runs to 355 residues: Epoxide hydrolase 2 (355 aa).

An AB hydrolase-1 domain is found at Val78 to Gln323. The Nucleophile role is filled by Asp152. Tyr263 (proton donor) is an active-site residue. The Proton acceptor role is filled by His319.

The protein belongs to the AB hydrolase superfamily. Epoxide hydrolase family.

The enzyme catalyses an epoxide + H2O = an ethanediol. It participates in lipid metabolism. Catalyzes the hydrolysis of epoxide-containing fatty acids. Active in vitro against trans-1,3-diphenylpropene oxide (t-DPPO), epoxyeicosatrienoic acids (EETs) including 8,9-EET, 11,12-EET and 14,15-EET and the linoleic acid metabolites 12,13-epoxy-9-octadecenoate (12,13-EpOME) and 9,10-epoxy-12-octadecenoate (9,10-EpOME). This chain is Epoxide hydrolase 2, found in Caenorhabditis elegans.